The following is a 508-amino-acid chain: Phenylalanine--tRNA ligase alpha subunit (508 aa).

Ala2 is subject to N-acetylalanine. Phosphoserine occurs at positions 193 and 301. An N6-acetyllysine modification is found at Lys311. L-phenylalanine contacts are provided by residues Thr329, Gln372–Glu374, and Tyr412. Glu414 lines the Mg(2+) pocket. Residue Phe438 participates in L-phenylalanine binding.

This sequence belongs to the class-II aminoacyl-tRNA synthetase family. Phe-tRNA synthetase alpha subunit type 2 subfamily. As to quaternary structure, heterotetramer; dimer of two heterodimers formed by FARSA and FARSB. Mg(2+) is required as a cofactor.

It is found in the cytoplasm. It catalyses the reaction tRNA(Phe) + L-phenylalanine + ATP = L-phenylalanyl-tRNA(Phe) + AMP + diphosphate + H(+). The polypeptide is Phenylalanine--tRNA ligase alpha subunit (Farsa) (Rattus norvegicus (Rat)).